The sequence spans 425 residues: Tumor necrosis factor receptor superfamily member 16 (425 aa).

Positions 1 to 29 (MRRAGAACSAMDRLRLLLLLILGVSSGGA) are cleaved as a signal peptide. Topologically, residues 30 to 253 (KETCSTGLYT…VTRGTTDNLI (224 aa)) are extracellular. 4 TNFR-Cys repeats span residues 32-65 (TCST…QTVC), 67-108 (PCLD…DAVC), 109-147 (RCAY…NTVC), and 149-189 (ECPE…DAEC). 12 disulfides stabilise this stretch: cysteine 33/cysteine 44, cysteine 45/cysteine 58, cysteine 48/cysteine 65, cysteine 68/cysteine 84, cysteine 87/cysteine 100, cysteine 90/cysteine 108, cysteine 110/cysteine 123, cysteine 126/cysteine 139, cysteine 129/cysteine 147, cysteine 150/cysteine 165, cysteine 168/cysteine 181, and cysteine 171/cysteine 189. N-linked (GlcNAc...) asparagine glycans are attached at residues asparagine 61 and asparagine 71. The tract at residues 193 to 225 (PGRWIPRSTPPEGSDSTAPSTQEPEVPPEQDLV) is disordered. Residues 206-215 (SDSTAPSTQE) show a composition bias toward polar residues. A helical transmembrane segment spans residues 254–274 (PVYCSILAAVVVGLVAYIAFK). The Cytoplasmic portion of the chain corresponds to 275–425 (RWNSCKQNKQ…CSESTATSPV (151 aa)). 2 stretches are compositionally biased toward polar residues: residues 282–292 (NKQGANSRPVN) and 306–327 (SGIS…TASG). A disordered region spans residues 282–332 (NKQGANSRPVNQTPPPEGEKLHSDSGISVDSQSLHDQQTHTQTASGQALKG). Serine 312 is subject to Phosphoserine. The interval 327–342 (GQALKGDGNLYSSLPL) is mediates interaction with KIDINS220. The Death domain occupies 354–419 (GDTWRHLAGE…DIVESLCSES (66 aa)).

As to quaternary structure, homodimer; disulfide-linked. Heterodimer with SORCS2. The extracellular domains of the heterodimer bind NGF. The cytoplasmic region of the heterodimer binds TRIO. NGF binding mediates dissociation of TRIO from the receptor complex. Interacts with RTN4R. Interacts with TRAF2, TRAF4 and TRAF6. Interacts with PTPN13 and RANBP9. Interacts through TRAF6 with SQSTM1 which bridges NGFR to NTRK1. Interacts with BEX1. Interacts with BEX3. Interacts with KIDINS220 and NTRK1. Can form a ternary complex with NTRK1 and KIDINS220 and this complex is affected by the expression levels of KIDINS220. An increase in KIDINS220 expression leads to a decreased association of NGFR and NTRK1. Interacts (via death domain) with RAB31. Interacts with NTRK2; may regulate the ligand specificity of the NTRK2 receptor. Interacts with LINGO1. Interacts with NRADD. Interacts with MAGED1; the interaction antagonizes the association NGFR:NTRK1. Interacts (via death domain) with ARHGDIA and RIPK2. Interacts with BFAR. Subject to intramembrane proteolytic cleavage by the gamma-secretase complex, giving rise to an intracellular fragment that is rapidly degraded via the proteasome. Post-translationally, N- and O-glycosylated. In terms of processing, phosphorylated on serine residues.

The protein resides in the cell membrane. It is found in the cytoplasm. Its subcellular location is the perikaryon. The protein localises to the cell projection. It localises to the growth cone. The protein resides in the dendritic spine. Its function is as follows. Low affinity receptor which can bind to NGF, BDNF, NTF3, and NTF4. Forms a heterodimeric receptor with SORCS2 that binds the precursor forms of NGF, BDNF and NTF3 with high affinity, and has much lower affinity for mature NGF and BDNF. In response to proNGF binding, the heterodimeric receptor with SORCS2 activates a signaling cascade that leads to decreased Rac activity, reorganization of the actin cytoskeleton and neuronal growth cone collapse. Plays an important role in differentiation and survival of specific neuronal populations during development. Can mediate cell survival as well as cell death of neural cells. Plays a role in the inactivation of RHOA. Plays a role in the regulation of the translocation of GLUT4 to the cell surface in adipocytes and skeletal muscle cells in response to insulin, probably by regulating RAB31 activity, and thereby contributes to the regulation of insulin-dependent glucose uptake. Necessary for the circadian oscillation of the clock genes BMAL1, PER1, PER2 and NR1D1 in the suprachiasmatic nucleus (SCN) of the brain and in liver and of the genes involved in glucose and lipid metabolism in the liver. The sequence is that of Tumor necrosis factor receptor superfamily member 16 (Ngfr) from Rattus norvegicus (Rat).